The following is a 613-amino-acid chain: UvrABC system protein C (613 aa).

Positions 29-107 constitute a GIY-YIG domain; sequence DVAGVYKMLG…IKTLKPKYNI (79 aa). Residues 217-252 enclose the UVR domain; that stretch reads KELQRELFDSMRKFSDNLDYESAMVYRDRLQALKSI.

Belongs to the UvrC family. As to quaternary structure, interacts with UvrB in an incision complex.

Its subcellular location is the cytoplasm. Its function is as follows. The UvrABC repair system catalyzes the recognition and processing of DNA lesions. UvrC both incises the 5' and 3' sides of the lesion. The N-terminal half is responsible for the 3' incision and the C-terminal half is responsible for the 5' incision. The sequence is that of UvrABC system protein C from Anaplasma marginale (strain St. Maries).